Here is a 248-residue protein sequence, read N- to C-terminus: MDIVQSSIDTLNHFYEISGVEVGQHFYWQIGGFKVHAQVLITSWVVIAVLLGSATIAVRDPQTIPTGGQNFVEYVLGFVRDLTRTQIGEEEYGPWVPFIGTMFLFILVSNWSGALLPWKIIQLPHGELAAPTNDINTTVALALLTSVAYFYAGLAKKGLGYFGKYIQPTPVLLPINILEDFTKPLSLSFRLFGNILADELVVAVLVSLVPLVVPIPVMFLGLFTSAIQALIFATLAAAYIGESMEGHH.

The next 5 helical transmembrane spans lie at 38–58, 96–116, 135–155, 200–220, and 221–241; these read QVLI…TIAV, VPFI…GALL, INTT…AGLA, LVVA…VMFL, and GLFT…AYIG.

It belongs to the ATPase A chain family. In terms of assembly, F-type ATPases have 2 components, CF(1) - the catalytic core - and CF(0) - the membrane proton channel. CF(1) has five subunits: alpha(3), beta(3), gamma(1), delta(1), epsilon(1). CF(0) has four main subunits: a, b, b' and c.

It localises to the plastid. The protein resides in the chloroplast thylakoid membrane. Key component of the proton channel; it plays a direct role in the translocation of protons across the membrane. This chain is ATP synthase subunit a, chloroplastic, found in Cycas taitungensis (Prince sago).